Here is a 45-residue protein sequence, read N- to C-terminus: Large ribosomal subunit protein bL34c (45 aa).

Residues 1 to 21 (MIQRTLTGTNRKKTKRSGFRS) are disordered. Residues 10-19 (NRKKTKRSGF) are compositionally biased toward basic residues.

This sequence belongs to the bacterial ribosomal protein bL34 family.

It localises to the plastid. The protein resides in the chloroplast. The chain is Large ribosomal subunit protein bL34c (rpl34) from Cyanidium caldarium (Red alga).